The sequence spans 1408 residues: DNA-directed RNA polymerase subunit beta' (1408 aa).

Zn(2+) contacts are provided by C70, C72, C85, and C88. Residues D460, D462, and D464 each contribute to the Mg(2+) site. Residues C814, C887, C894, and C897 each contribute to the Zn(2+) site.

The protein belongs to the RNA polymerase beta' chain family. In terms of assembly, the RNAP catalytic core consists of 2 alpha, 1 beta, 1 beta' and 1 omega subunit. When a sigma factor is associated with the core the holoenzyme is formed, which can initiate transcription. Mg(2+) serves as cofactor. It depends on Zn(2+) as a cofactor.

It carries out the reaction RNA(n) + a ribonucleoside 5'-triphosphate = RNA(n+1) + diphosphate. In terms of biological role, DNA-dependent RNA polymerase catalyzes the transcription of DNA into RNA using the four ribonucleoside triphosphates as substrates. This Hydrogenovibrio crunogenus (strain DSM 25203 / XCL-2) (Thiomicrospira crunogena) protein is DNA-directed RNA polymerase subunit beta'.